Reading from the N-terminus, the 143-residue chain is Large ribosomal subunit protein uL15 (143 aa).

Basic residues-rich tracts occupy residues 1–14 and 23–38; these read MIRK…KRGS and KKHR…GNAG. Residues 1 to 38 are disordered; sequence MIRKSKKITKKRGSRTCGYGEAKKHRGAGHRGGRGNAG.

This sequence belongs to the universal ribosomal protein uL15 family. As to quaternary structure, part of the 50S ribosomal subunit.

Its function is as follows. Binds to the 23S rRNA. The chain is Large ribosomal subunit protein uL15 from Methanococcus maripaludis (strain DSM 14266 / JCM 13030 / NBRC 101832 / S2 / LL).